Here is a 203-residue protein sequence, read N- to C-terminus: 3-isopropylmalate dehydratase small subunit (203 aa).

This sequence belongs to the LeuD family. LeuD type 1 subfamily. As to quaternary structure, heterodimer of LeuC and LeuD.

The enzyme catalyses (2R,3S)-3-isopropylmalate = (2S)-2-isopropylmalate. It functions in the pathway amino-acid biosynthesis; L-leucine biosynthesis; L-leucine from 3-methyl-2-oxobutanoate: step 2/4. Catalyzes the isomerization between 2-isopropylmalate and 3-isopropylmalate, via the formation of 2-isopropylmaleate. The protein is 3-isopropylmalate dehydratase small subunit of Rhodospirillum centenum (strain ATCC 51521 / SW).